Consider the following 656-residue polypeptide: Methionine--tRNA ligase (656 aa).

The 'HIGH' region signature appears at 13 to 23 (YYPSGNLHIGH). The short motif at 308–312 (KMSKS) is the 'KMSKS' region element. ATP is bound at residue Lys-311. The tRNA-binding domain occupies 556 to 656 (DFDKVEIKAA…SAIPNGAVIK (101 aa)).

It belongs to the class-I aminoacyl-tRNA synthetase family. MetG type 2B subfamily. In terms of assembly, homodimer.

The protein localises to the cytoplasm. The enzyme catalyses tRNA(Met) + L-methionine + ATP = L-methionyl-tRNA(Met) + AMP + diphosphate. Is required not only for elongation of protein synthesis but also for the initiation of all mRNA translation through initiator tRNA(fMet) aminoacylation. This is Methionine--tRNA ligase from Staphylococcus epidermidis (strain ATCC 12228 / FDA PCI 1200).